The following is a 161-amino-acid chain: Probable ubiquitin-conjugating enzyme E2 17 (161 aa).

Residues 15-161 (IATNRLQKEF…TRWRFHDDKV (147 aa)) enclose the UBC core domain. C99 (glycyl thioester intermediate) is an active-site residue.

This sequence belongs to the ubiquitin-conjugating enzyme family.

The catalysed reaction is S-ubiquitinyl-[E1 ubiquitin-activating enzyme]-L-cysteine + [E2 ubiquitin-conjugating enzyme]-L-cysteine = [E1 ubiquitin-activating enzyme]-L-cysteine + S-ubiquitinyl-[E2 ubiquitin-conjugating enzyme]-L-cysteine.. The protein operates within protein modification; protein ubiquitination. In terms of biological role, accepts the ubiquitin from the E1 complex and catalyzes its covalent attachment to other proteins. This chain is Probable ubiquitin-conjugating enzyme E2 17 (UBC17), found in Arabidopsis thaliana (Mouse-ear cress).